Reading from the N-terminus, the 258-residue chain is Axonemal dynein light intermediate polypeptide 1 (258 aa).

2 disordered regions span residues 1 to 60 and 202 to 231; these read MIPP…CVPD and DLER…EEKK. The stretch at 176–255 forms a coiled coil; the sequence is MRKALQAEQG…LKAQLEGIIA (80 aa).

It belongs to the inner dynein arm light chain family. In terms of assembly, interacts with CFAP45. Interacts with DYNC1H1. As to expression, predominantly expressed in the testis, also detected at lower levels in several tissues expressing cilia. Strongly expressed in elongating spermatid cells (at protein level).

It localises to the cell projection. The protein resides in the cilium. The protein localises to the flagellum. It is found in the dynein axonemal particle. Its subcellular location is the cytoplasm. In terms of biological role, involved in sperm flagellum assembly. The polypeptide is Axonemal dynein light intermediate polypeptide 1 (Mus musculus (Mouse)).